A 509-amino-acid polypeptide reads, in one-letter code: MNWILYVILPAVCIILGWTIRWLYARFQLSASEQRAERILQEAIKDAEAQKKEFLLEAKEQLIREQKQQERENRERRSDLQRFERRLAQKEEVLDKRVETVEKQEKELIKREAALDERTEILSGEEERYREELERISGLTQQQAKDLIIRDLEAEAKHDAVTIINKIEQEAQLTAEKKAQDILITTIQRLATETASDITVSTVSLPSDEMKGRIIGREGRNIRALETLTGVDIIIDDTPEAVVVSCFDPVRKEIARVALERLILDGRIHPARIEEIVQKVTREISQKVYEEGEKVLFDLGIHNMNQEGVRALGRLYFRTSYGQNVLQHSKEVAIIAGMIASEIGANVEIAKRGALLHDIGKGAETDSDKNHAEIGMELAKRINEDPRVVNAVGAHHNDIEPTCIESVIVQIADAISAARPGARRETMDNYVKRLENLEQLAEGFNGVEKAYAIQAGRELRVVINNEKISDADTKILARDIAKKIENDLQYPGRIRVTLIRETRIVEYAR.

A helical transmembrane segment spans residues 3–23 (WILYVILPAVCIILGWTIRWL). In terms of domain architecture, KH spans 199-284 (TVSTVSLPSD…EIVQKVTREI (86 aa)). In terms of domain architecture, HD spans 325–418 (VLQHSKEVAI…VQIADAISAA (94 aa)).

The protein belongs to the RNase Y family.

Its subcellular location is the cell membrane. In terms of biological role, endoribonuclease that initiates mRNA decay. This chain is Ribonuclease Y, found in Treponema denticola (strain ATCC 35405 / DSM 14222 / CIP 103919 / JCM 8153 / KCTC 15104).